Reading from the N-terminus, the 556-residue chain is Genetic interactor of prohibitins 3, mitochondrial (556 aa).

A mitochondrion-targeting transit peptide spans 1–21; it reads MLNLCHALRGVRQFSCSVIVK. Positions 113–305 constitute a CP-type G domain; the sequence is ESTLNDILNY…LFDLPGYSTS (193 aa).

It belongs to the TRAFAC class YlqF/YawG GTPase family. GEP3 subfamily.

It localises to the mitochondrion. Its function is as follows. Interacts genetically with prohibitins and thus may be involved in the mitochondrial lipid metabolism. The sequence is that of Genetic interactor of prohibitins 3, mitochondrial (GEP3) from Saccharomyces cerevisiae (strain Zymaflore VL3) (Baker's yeast).